Consider the following 430-residue polypeptide: Divergent protein kinase domain 2A (430 aa).

The N-terminal stretch at methionine 1–leucine 35 is a signal peptide.

This sequence belongs to the DIPK family. As to expression, expressed in heart, brain, liver, spleen, kidney, lung, thymus, testis, ovary and muscle.

Its subcellular location is the golgi apparatus. It is found in the cytoplasmic vesicle. The protein localises to the COPI-coated vesicle. The protein resides in the secreted. In terms of biological role, may play a role in cardiomyocyte proliferation through paracrine signaling and activation of the PI3-kinase signaling cascade. This is Divergent protein kinase domain 2A (Dipk2a) from Mus musculus (Mouse).